Consider the following 236-residue polypeptide: Adenylate dimethylallyltransferase (236 aa).

This sequence belongs to the isopentenyl transferase family.

The catalysed reaction is dimethylallyl diphosphate + AMP = N(6)-(dimethylallyl)adenosine 5'-phosphate + diphosphate. Its function is as follows. Transfers dimethylallyl groups to AMP as part of the biosynthesis of cytokinin phytohormones. The protein is Adenylate dimethylallyltransferase (ipt) of Allorhizobium ampelinum (strain ATCC BAA-846 / DSM 112012 / S4) (Agrobacterium vitis (strain S4)).